The sequence spans 506 residues: Maturase K (506 aa).

This sequence belongs to the intron maturase 2 family. MatK subfamily.

It is found in the plastid. Its subcellular location is the chloroplast. In terms of biological role, usually encoded in the trnK tRNA gene intron. Probably assists in splicing its own and other chloroplast group II introns. In Trifolium incarnatum (Crimson clover), this protein is Maturase K.